A 121-amino-acid chain; its full sequence is Large ribosomal subunit protein uL22 (121 aa).

Belongs to the universal ribosomal protein uL22 family. As to quaternary structure, part of the 50S ribosomal subunit.

This protein binds specifically to 23S rRNA; its binding is stimulated by other ribosomal proteins, e.g. L4, L17, and L20. It is important during the early stages of 50S assembly. It makes multiple contacts with different domains of the 23S rRNA in the assembled 50S subunit and ribosome. In terms of biological role, the globular domain of the protein is located near the polypeptide exit tunnel on the outside of the subunit, while an extended beta-hairpin is found that lines the wall of the exit tunnel in the center of the 70S ribosome. This Beutenbergia cavernae (strain ATCC BAA-8 / DSM 12333 / CCUG 43141 / JCM 11478 / NBRC 16432 / NCIMB 13614 / HKI 0122) protein is Large ribosomal subunit protein uL22.